The primary structure comprises 218 residues: uncharacterized protein (218 aa).

4 helical membrane passes run 10 to 30 (IPPL…SLGI), 55 to 75 (IGVG…GYSI), 147 to 167 (VTGG…AGMA), and 175 to 195 (FSWI…ILLR).

The protein belongs to the DedA family.

It is found in the cell membrane. This is an uncharacterized protein from Mycobacterium tuberculosis (strain CDC 1551 / Oshkosh).